The chain runs to 245 residues: Tryptophan synthase alpha chain (245 aa).

Active-site proton acceptor residues include E35 and D46.

It belongs to the TrpA family. Tetramer of two alpha and two beta chains.

The catalysed reaction is (1S,2R)-1-C-(indol-3-yl)glycerol 3-phosphate + L-serine = D-glyceraldehyde 3-phosphate + L-tryptophan + H2O. It participates in amino-acid biosynthesis; L-tryptophan biosynthesis; L-tryptophan from chorismate: step 5/5. Functionally, the alpha subunit is responsible for the aldol cleavage of indoleglycerol phosphate to indole and glyceraldehyde 3-phosphate. The protein is Tryptophan synthase alpha chain of Sulfurisphaera tokodaii (strain DSM 16993 / JCM 10545 / NBRC 100140 / 7) (Sulfolobus tokodaii).